Reading from the N-terminus, the 556-residue chain is MSDRLDNQRVVRAPRGPEITCKSWLSEAPLRMLMNNLDPEVAEKPEELVVYGGIGRAARNWQCYDQIVAALKRLEDDETLLVQSGKAVGVFKTHRDAPRVLIANSNLVPHWATWETFHALDRAGLMMYGQMTAGSWIYIGSQGIVQGTYETFVEAGRRHYGGSLAGRWILTGGLGGMGGAQPLAATMAGASMLAVECQPSRIEARLRTGYLDRQTADLDQALAWIAEAGAPGAKPVSVGLLGNAAEVFPELVKRGVRPDLVTDQTSAHDPLNGYLPAGWSLERWERGRERAPAEVIAAAKASMATQVRAMLAFHAQGIPTVDYGNNIRQRALEEGVSDAFAFPGFVPAYIRPLFCRGIGPFRWAALSGDPEDIYRTDAKVKELIPDDPHLHTWLDMARERIHFQGLPSRICWVGLGDRHRLGLAFNAMVASGELKAPVVIGRDHLDSGSVASPNRETEAMRDGSDAVSDWPLLNALLNTAGGATWVSLHHGGGVGMGFSQHAGMVIVCDGSEDAARRIGRVLWNDPATGVMRHADAGYDDAIACAREKGLDLPFLG.

NAD(+) is bound by residues 52–53, glutamine 130, 176–178, glutamate 196, arginine 201, 243–244, 264–268, 274–275, and tyrosine 323; these read GG, GMG, NA, QTSAH, and YL. Cysteine 411 is an active-site residue. Glycine 493 contacts NAD(+).

It belongs to the urocanase family. The cofactor is NAD(+).

It is found in the cytoplasm. It catalyses the reaction 4-imidazolone-5-propanoate = trans-urocanate + H2O. It functions in the pathway amino-acid degradation; L-histidine degradation into L-glutamate; N-formimidoyl-L-glutamate from L-histidine: step 2/3. Catalyzes the conversion of urocanate to 4-imidazolone-5-propionate. The protein is Urocanate hydratase of Rhodospirillum rubrum (strain ATCC 11170 / ATH 1.1.1 / DSM 467 / LMG 4362 / NCIMB 8255 / S1).